Consider the following 936-residue polypeptide: Protein NLP2 (936 aa).

The disordered stretch occupies residues 99–130 (IMSVNPTEAEKTGKSSGELGSDDGAHQGSSMV). One can recognise an RWP-RK domain in the interval 550–635 (QPSSIGHAEK…INSVHGVDRS (86 aa)). Disordered stretches follow at residues 666 to 697 (PSVG…SCQL), 753 to 782 (CTNP…IQQE), and 794 to 827 (DKDH…RSAL). Basic and acidic residues predominate over residues 671–682 (TVEENSDLKSEE). Residues 688-697 (DGSQRQSCQL) show a composition bias toward polar residues. A compositionally biased stretch (low complexity) spans 754-769 (TNPSSSLRPSSESTRN). The span at 770–781 (QIVGRNSPSIQQ) shows a compositional bias: polar residues. The segment covering 801–815 (STSGMTDSSSGSASS) has biased composition (low complexity). A compositionally biased stretch (polar residues) spans 816-825 (HPTFKQNTRS). A PB1 domain is found at 834–916 (ALTVKATYNG…RIVKLQVRDL (83 aa)).

It localises to the nucleus. Functionally, probable transcription factor. This chain is Protein NLP2, found in Oryza sativa subsp. japonica (Rice).